The sequence spans 205 residues: GTP cyclohydrolase-2 (205 aa).

49 to 53 (RIHSE) is a GTP binding site. Zn(2+) contacts are provided by Cys-54, Cys-65, and Cys-67. Residues Gln-70, 92–94 (EGR), and Thr-114 contribute to the GTP site. The active-site Proton acceptor is Asp-126. The active-site Nucleophile is the Arg-128. GTP-binding residues include Thr-149 and Lys-154.

This sequence belongs to the GTP cyclohydrolase II family. Zn(2+) serves as cofactor.

It carries out the reaction GTP + 4 H2O = 2,5-diamino-6-hydroxy-4-(5-phosphoribosylamino)-pyrimidine + formate + 2 phosphate + 3 H(+). Its pathway is cofactor biosynthesis; riboflavin biosynthesis; 5-amino-6-(D-ribitylamino)uracil from GTP: step 1/4. Its function is as follows. Catalyzes the conversion of GTP to 2,5-diamino-6-ribosylamino-4(3H)-pyrimidinone 5'-phosphate (DARP), formate and pyrophosphate. The sequence is that of GTP cyclohydrolase-2 from Shewanella loihica (strain ATCC BAA-1088 / PV-4).